The primary structure comprises 201 residues: MKKTAKTDTEDAFKFRSTFGEHYYDGYGARHETPHIVAYTGEVTAAGPGRVLISSPLGSCIAVCAYDPGTRVGGLAHVMLPGVPPAHAETGKDRYAAHALETLFSVMQNEGADPGNLLICLIGGANVLRREHDTIHIDNLRSLTSLILQRNLPICRTMTGGSERMMARMETKTGRIFQTTGNNPEEMLFDYFTHNIENPDN.

It belongs to the CheD family.

It carries out the reaction L-glutaminyl-[protein] + H2O = L-glutamyl-[protein] + NH4(+). In terms of biological role, probably deamidates glutamine residues to glutamate on methyl-accepting chemotaxis receptors (MCPs), playing an important role in chemotaxis. The polypeptide is Probable chemoreceptor glutamine deamidase CheD (Chlorobium luteolum (strain DSM 273 / BCRC 81028 / 2530) (Pelodictyon luteolum)).